Reading from the N-terminus, the 419-residue chain is UDP-N-acetylglucosamine 1-carboxyvinyltransferase (419 aa).

22 to 23 (KN) is a binding site for phosphoenolpyruvate. A UDP-N-acetyl-alpha-D-glucosamine-binding site is contributed by Arg93. Residue Cys117 is the Proton donor of the active site. Residue Cys117 is modified to 2-(S-cysteinyl)pyruvic acid O-phosphothioketal. UDP-N-acetyl-alpha-D-glucosamine is bound by residues Asp307 and Ile329.

The protein belongs to the EPSP synthase family. MurA subfamily.

Its subcellular location is the cytoplasm. The enzyme catalyses phosphoenolpyruvate + UDP-N-acetyl-alpha-D-glucosamine = UDP-N-acetyl-3-O-(1-carboxyvinyl)-alpha-D-glucosamine + phosphate. Its pathway is cell wall biogenesis; peptidoglycan biosynthesis. Cell wall formation. Adds enolpyruvyl to UDP-N-acetylglucosamine. The sequence is that of UDP-N-acetylglucosamine 1-carboxyvinyltransferase from Shewanella sediminis (strain HAW-EB3).